We begin with the raw amino-acid sequence, 105 residues long: UPF0148 protein PH0795 (105 aa).

It belongs to the UPF0148 family.

The sequence is that of UPF0148 protein PH0795 from Pyrococcus horikoshii (strain ATCC 700860 / DSM 12428 / JCM 9974 / NBRC 100139 / OT-3).